Here is a 156-residue protein sequence, read N- to C-terminus: Small ribosomal subunit protein uS7 (156 aa).

Belongs to the universal ribosomal protein uS7 family. In terms of assembly, part of the 30S ribosomal subunit. Contacts proteins S9 and S11.

One of the primary rRNA binding proteins, it binds directly to 16S rRNA where it nucleates assembly of the head domain of the 30S subunit. Is located at the subunit interface close to the decoding center, probably blocks exit of the E-site tRNA. In Citrifermentans bemidjiense (strain ATCC BAA-1014 / DSM 16622 / JCM 12645 / Bem) (Geobacter bemidjiensis), this protein is Small ribosomal subunit protein uS7.